A 212-amino-acid polypeptide reads, in one-letter code: Methylthioribulose-1-phosphate dehydratase (212 aa).

Positions 97 and 99 each coordinate Zn(2+).

Belongs to the aldolase class II family. MtnB subfamily. In terms of assembly, homotetramer. Requires Zn(2+) as cofactor.

The catalysed reaction is 5-(methylsulfanyl)-D-ribulose 1-phosphate = 5-methylsulfanyl-2,3-dioxopentyl phosphate + H2O. The protein operates within amino-acid biosynthesis; L-methionine biosynthesis via salvage pathway; L-methionine from S-methyl-5-thio-alpha-D-ribose 1-phosphate: step 2/6. In terms of biological role, catalyzes the dehydration of methylthioribulose-1-phosphate (MTRu-1-P) into 2,3-diketo-5-methylthiopentyl-1-phosphate (DK-MTP-1-P). In Bacillus cereus (strain G9842), this protein is Methylthioribulose-1-phosphate dehydratase.